The chain runs to 96 residues: Aspartyl/glutamyl-tRNA(Asn/Gln) amidotransferase subunit C (96 aa).

It belongs to the GatC family. As to quaternary structure, heterotrimer of A, B and C subunits.

The catalysed reaction is L-glutamyl-tRNA(Gln) + L-glutamine + ATP + H2O = L-glutaminyl-tRNA(Gln) + L-glutamate + ADP + phosphate + H(+). It catalyses the reaction L-aspartyl-tRNA(Asn) + L-glutamine + ATP + H2O = L-asparaginyl-tRNA(Asn) + L-glutamate + ADP + phosphate + 2 H(+). Allows the formation of correctly charged Asn-tRNA(Asn) or Gln-tRNA(Gln) through the transamidation of misacylated Asp-tRNA(Asn) or Glu-tRNA(Gln) in organisms which lack either or both of asparaginyl-tRNA or glutaminyl-tRNA synthetases. The reaction takes place in the presence of glutamine and ATP through an activated phospho-Asp-tRNA(Asn) or phospho-Glu-tRNA(Gln). The polypeptide is Aspartyl/glutamyl-tRNA(Asn/Gln) amidotransferase subunit C (Exiguobacterium sp. (strain ATCC BAA-1283 / AT1b)).